A 118-amino-acid chain; its full sequence is Large ribosomal subunit protein bL19 (118 aa).

The protein belongs to the bacterial ribosomal protein bL19 family.

In terms of biological role, this protein is located at the 30S-50S ribosomal subunit interface and may play a role in the structure and function of the aminoacyl-tRNA binding site. This is Large ribosomal subunit protein bL19 from Nautilia profundicola (strain ATCC BAA-1463 / DSM 18972 / AmH).